A 135-amino-acid polypeptide reads, in one-letter code: Protein Wnt-7a (135 aa).

2 cysteine pairs are disulfide-bonded: C3–C17 and C5–C12. S9 carries the O-palmitoleoyl serine; by PORCN lipid modification. The tract at residues 41 to 69 (VEPVRASRNKRPTFLKIKKPLSYRKPMDT) is disordered linker. Intrachain disulfides connect C81–C112, C97–C107, C111–C134, and C130–C131. N98 is a glycosylation site (N-linked (GlcNAc...) asparagine).

The protein belongs to the Wnt family. Palmitoleoylation is required for efficient binding to frizzled receptors. Depalmitoleoylation leads to Wnt signaling pathway inhibition. In embryo, in brain and ventral neural tube; in adults, in brain.

The protein resides in the secreted. It is found in the extracellular space. It localises to the extracellular matrix. In terms of biological role, ligand for members of the frizzled family of seven transmembrane receptors that functions in the canonical Wnt/beta-catenin signaling pathway. Plays an important role in embryonic development, including dorsal versus ventral patterning during limb development, skeleton development and urogenital tract development. Required for central nervous system (CNS) angiogenesis and blood-brain barrier regulation. The polypeptide is Protein Wnt-7a (wnt7a) (Xenopus laevis (African clawed frog)).